We begin with the raw amino-acid sequence, 346 residues long: Biotin synthase (346 aa).

The Radical SAM core domain occupies 36 to 265 (YFGRQVMLHR…KAEIRIGGGR (230 aa)). 3 residues coordinate [4Fe-4S] cluster: Cys-54, Cys-58, and Cys-61. [2Fe-2S] cluster is bound by residues Cys-98, Cys-130, Cys-190, and Arg-260.

This sequence belongs to the radical SAM superfamily. Biotin synthase family. Homodimer. Requires [4Fe-4S] cluster as cofactor. The cofactor is [2Fe-2S] cluster.

The catalysed reaction is (4R,5S)-dethiobiotin + (sulfur carrier)-SH + 2 reduced [2Fe-2S]-[ferredoxin] + 2 S-adenosyl-L-methionine = (sulfur carrier)-H + biotin + 2 5'-deoxyadenosine + 2 L-methionine + 2 oxidized [2Fe-2S]-[ferredoxin]. The protein operates within cofactor biosynthesis; biotin biosynthesis; biotin from 7,8-diaminononanoate: step 2/2. In terms of biological role, catalyzes the conversion of dethiobiotin (DTB) to biotin by the insertion of a sulfur atom into dethiobiotin via a radical-based mechanism. In Acaryochloris marina (strain MBIC 11017), this protein is Biotin synthase.